The chain runs to 192 residues: Adenylate kinase (192 aa).

10–18 (GVPGVGKTT) provides a ligand contact to ATP.

It belongs to the archaeal adenylate kinase family.

Its subcellular location is the cytoplasm. It carries out the reaction AMP + ATP = 2 ADP. This Methanoculleus marisnigri (strain ATCC 35101 / DSM 1498 / JR1) protein is Adenylate kinase.